The chain runs to 977 residues: Fc receptor-like protein 5 (977 aa).

An N-terminal signal peptide occupies residues 1 to 15 (MLLWVILLVLAPVSG). Residues 16-851 (QFARTPRPII…ANRSGPFATG (836 aa)) are Extracellular-facing. 8 consecutive Ig-like C2-type domains span residues 23–101 (PIIF…LDFS), 188–271 (PFTR…SVIS), 287–374 (PVLT…LSVT), 380–463 (PVLN…KAVS), 473–556 (PVLT…EVVS), 566–651 (PILT…ISLS), 659–744 (PILT…VTLK), and 752–834 (PVLT…ETVT). Cystine bridges form between C44-C85, C211-C260, and C308-C355. N-linked (GlcNAc...) asparagine glycosylation occurs at N383. Cystine bridges form between C401-C448, C494-C541, C587-C634, C680-C727, and C773-C819. The chain crosses the membrane as a helical span at residues 852 to 872 (VAGGLLSIAGLAAGALLLYCW). Residues 873-977 (LSRKAGRKPA…LFLASSAPHR (105 aa)) lie on the Cytoplasmic side of the membrane. Positions 879 to 898 (RKPASDPARSPSDSDSQEPT) are disordered. Residues 883 to 892 (SDPARSPSDS) are compositionally biased toward low complexity. 4 consecutive short sequence motifs (ITIM motif) follow at residues 897 to 902 (PTYHNV), 910 to 915 (PVYTNA), 922 to 927 (VVYSEV), and 952 to 957 (IIYSEV).

Interacts with CR2. Interacts with CD19. In terms of tissue distribution, expressed in marginal zone B-cells, immunoblasts, tonsillar germinal center centrocytes and in the intraepithelial and interfollicular regions of the tonsil. Expressed in many lymphoma cell lines and on hairy cell leukemia cells. Isoform 1, isoform 3, isoform 4 and isoform 5 are detected in lymph node, spleen, bone marrow, and small intestine with preponderance of isoform 3. Expressed in mature and memory B-cells and down-regulated in germinal center cells (at protein level).

It localises to the cell membrane. Functionally, plays an important role in B-cell response to antigen that acts both as a negative or positive coreceptor. Inhibits B-cell receptor (BCR) signaling in the absence of CR2 stimulation but engagement with CR2 and the BCR lead to a superior calcium response compared to CR2 and BCR costimulation. May be involved in B-cell development and differentiation in peripheral lymphoid organs and may be useful markers of B-cell stages. May have an immunoregulatory role in marginal zone B-cells. May play a role in fertilization. The sequence is that of Fc receptor-like protein 5 (FCRL5) from Homo sapiens (Human).